The following is a 121-amino-acid chain: Basic phospholipase A2 homolog 2 (121 aa).

7 cysteine pairs are disulfide-bonded: C26-C115, C28-C44, C43-C95, C49-C121, C50-C88, C57-C81, and C75-C86. Positions 105-117 (KKYRYHLKPLCKK) are important for membrane-damaging activities in eukaryotes and bacteria; heparin-binding.

It belongs to the phospholipase A2 family. Group II subfamily. K49 sub-subfamily. Homodimer; non-covalently linked (probable alternative/compact dimer conformation in solution). As to expression, expressed by the venom gland.

It localises to the secreted. Snake venom phospholipase A2 homolog that lacks enzymatic activity. Is myotoxic and displays edema-inducing activities in mouse paw. Also displays cytotoxic activity against myotubes. A model of myotoxic mechanism has been proposed: an apo Lys49-PLA2 is activated by the entrance of a hydrophobic molecule (e.g. fatty acid) at the hydrophobic channel of the protein leading to a reorientation of a monomer. This reorientation causes a transition between 'inactive' to 'active' states, causing alignment of C-terminal and membrane-docking sites (MDoS) side-by-side and putting the membrane-disruption sites (MDiS) in the same plane, exposed to solvent and in a symmetric position for both monomers. The MDoS region stabilizes the toxin on membrane by the interaction of charged residues with phospholipid head groups. Subsequently, the MDiS region destabilizes the membrane with penetration of hydrophobic residues. This insertion causes a disorganization of the membrane, allowing an uncontrolled influx of ions (i.e. calcium and sodium), and eventually triggering irreversible intracellular alterations and cell death. This is Basic phospholipase A2 homolog 2 from Bothrops brazili (Brazil's lancehead).